The chain runs to 445 residues: Chromosome partition protein MukF (445 aa).

The segment at 213-241 is leucine-zipper; sequence LSETSATLRELQDTLQAAGDELQTQILDI.

This sequence belongs to the MukF family. In terms of assembly, interacts, and probably forms a ternary complex, with MukE and MukB via its C-terminal region. The complex formation is stimulated by calcium or magnesium. It is required for an interaction between MukE and MukB.

It localises to the cytoplasm. It is found in the nucleoid. In terms of biological role, involved in chromosome condensation, segregation and cell cycle progression. May participate in facilitating chromosome segregation by condensation DNA from both sides of a centrally located replisome during cell division. Not required for mini-F plasmid partitioning. Probably acts via its interaction with MukB and MukE. Overexpression results in anucleate cells. It has a calcium binding activity. This Vibrio cholerae serotype O1 (strain ATCC 39541 / Classical Ogawa 395 / O395) protein is Chromosome partition protein MukF.